A 721-amino-acid chain; its full sequence is Exo beta-1,2-glucooligosaccharide sophorohydrolase (non-reducing end) (721 aa).

Positions 1–18 (MKHIALLTTLLLSASLQA) are cleaved as a signal peptide. Residues 474-708 (NHKLIGWNET…LLWNLFMSHP (235 aa)) form the Glycoamylase-like domain.

Monomer.

It is found in the periplasm. The enzyme catalyses [(1-&gt;2)-beta-D-glucosyl](n) + H2O = [(1-&gt;2)-beta-D-glucosyl](n-2) + sophorose. Catalyzes the hydrolysis of linear beta-1,2-glucan and beta-1,2-glucooligosaccharides with degrees of polymerization (DPs) greater than or equal to 4, to produce sophorose. The best substrates are tetra- and pentasaccharides. Acts as an exo-type enzyme that releases sophorose from the non-reducing end of the substrate. It cannot hydrolyze cyclic beta-1,2-glucans. The sequence is that of Exo beta-1,2-glucooligosaccharide sophorohydrolase (non-reducing end) from Parabacteroides distasonis (strain ATCC 8503 / DSM 20701 / CIP 104284 / JCM 5825 / NCTC 11152).